The chain runs to 305 residues: Coenzyme PQQ synthesis protein B (305 aa).

It belongs to the PqqB family.

It participates in cofactor biosynthesis; pyrroloquinoline quinone biosynthesis. May be involved in the transport of PQQ or its precursor to the periplasm. This is Coenzyme PQQ synthesis protein B from Methylobacillus flagellatus.